The following is a 150-amino-acid chain: Protein Smg homolog (150 aa).

Belongs to the Smg family.

The chain is Protein Smg homolog from Methylobacillus flagellatus (strain ATCC 51484 / DSM 6875 / VKM B-1610 / KT).